Reading from the N-terminus, the 478-residue chain is Glutamate--tRNA ligase (478 aa).

A 'HIGH' region motif is present at residues 9 to 19 (PSPTGLLHIGT). Positions 248–252 (KLSKR) match the 'KMSKS' region motif. Lys-251 is a binding site for ATP.

The protein belongs to the class-I aminoacyl-tRNA synthetase family. Glutamate--tRNA ligase type 1 subfamily. Monomer.

Its subcellular location is the cytoplasm. The catalysed reaction is tRNA(Glu) + L-glutamate + ATP = L-glutamyl-tRNA(Glu) + AMP + diphosphate. Functionally, catalyzes the attachment of glutamate to tRNA(Glu) in a two-step reaction: glutamate is first activated by ATP to form Glu-AMP and then transferred to the acceptor end of tRNA(Glu). The polypeptide is Glutamate--tRNA ligase (Prochlorococcus marinus subsp. pastoris (strain CCMP1986 / NIES-2087 / MED4)).